Here is a 225-residue protein sequence, read N- to C-terminus: GTP-binding nuclear protein Ran (225 aa).

The Small GTPase Ran-type domain maps to V8–D172. D19–T26 lines the GTP pocket. The tract at residues K38–V46 is switch-I. Residues G69, N123 to D126, and S151 to K153 each bind GTP. The tract at residues G69 to N85 is switch-II.

It belongs to the small GTPase superfamily. Ran family. Monomer. Found in a nuclear export complex with RanGTP, exportin and pre-miRNA.

Its subcellular location is the nucleus. GTP-binding protein involved in nucleocytoplasmic transport. Required for the import of protein into the nucleus and also for RNA export. Involved in chromatin condensation and control of cell cycle. In Tetrahymena thermophila, this protein is GTP-binding nuclear protein Ran.